A 294-amino-acid chain; its full sequence is Nucleophosmin (294 aa).

Residue methionine 1 is modified to N-acetylmethionine. A necessary for interaction with APEX1 region spans residues 1–117 (MEDSMDMDMS…PVHISGQHLV (117 aa)). The tract at residues 1 to 186 (MEDSMDMDMS…DDDDFDDEEA (186 aa)) is required for interaction with SENP3. Position 4 is a phosphoserine; by PLK1 and PLK2 (serine 4). Serine 10 is modified (phosphoserine). Lysine 27 participates in a covalent cross-link: Glycyl lysine isopeptide (Lys-Gly) (interchain with G-Cter in SUMO2). The residue at position 32 (lysine 32) is an N6-acetyllysine; alternate. Residue lysine 32 forms a Glycyl lysine isopeptide (Lys-Gly) (interchain with G-Cter in SUMO1); alternate linkage. Lysine 32 participates in a covalent cross-link: Glycyl lysine isopeptide (Lys-Gly) (interchain with G-Cter in SUMO2); alternate. Serine 43 is subject to Phosphoserine. Tyrosine 67 carries the post-translational modification Phosphotyrosine. Serine 70 carries the phosphoserine modification. A phosphothreonine mark is found at threonine 75 and threonine 95. The segment covering 120 to 132 (EEDAESEDEEEED) has biased composition (acidic residues). The interval 120 to 247 (EEDAESEDEE…PKGPSSVEDI (128 aa)) is disordered. Phosphoserine; by CDK2 is present on serine 125. 2 positions are modified to phosphoserine: serine 137 and serine 139. Residue lysine 141 forms a Glycyl lysine isopeptide (Lys-Gly) (interchain with G-Cter in SUMO2) linkage. Lysine 150 carries the post-translational modification N6-acetyllysine; alternate. A Glycyl lysine isopeptide (Lys-Gly) (interchain with G-Cter in SUMO2); alternate cross-link involves residue lysine 150. The Nuclear localization signal signature appears at 152-157 (PQKKVK). Lysine 154 is subject to N6-acetyllysine. Positions 161-187 (DEDDDDDDEEDDDEDDDDDDFDDEEAE) are enriched in acidic residues. The interaction with NOP2 stretch occupies residues 187–215 (EEKAPVKKSIRDTPAKNAQKSNQNGKDSK). A compositionally biased stretch (basic and acidic residues) spans 188–200 (EKAPVKKSIRDTP). Residues 191–197 (PVKKSIR) carry the Nuclear localization signal motif. Threonine 199 carries the phosphothreonine; by CDK1, CDK2 and CDK6 modification. Polar residues predominate over residues 202-222 (KNAQKSNQNGKDSKPSSTPRS). Serine 207 carries the post-translational modification ADP-ribosylserine. Lysine 212 carries the N6-acetyllysine modification. Lysine 215 participates in a covalent cross-link: Glycyl lysine isopeptide (Lys-Gly) (interchain with G-Cter in SUMO2). Threonine 219 carries the post-translational modification Phosphothreonine; by CDK1. A compositionally biased stretch (basic and acidic residues) spans 223-235 (KGQESFKKQEKTP). The residue at position 227 (serine 227) is a Phosphoserine. Lysine 229 carries the N6-acetyllysine modification. Lysine 230 is modified (N6-acetyllysine; alternate). Lysine 230 participates in a covalent cross-link: Glycyl lysine isopeptide (Lys-Gly) (interchain with G-Cter in SUMO); alternate. 2 positions are modified to phosphothreonine; by CDK1: threonine 234 and threonine 237. 2 positions are modified to phosphoserine: serine 242 and serine 243. Residues 243–294 (SVEDIKAKMQASIEKGGSLPKVEAKFINYVKNCFRMTDQEAIQDLWQWRKSL) form a required for nucleolar localization region. Residue lysine 248 forms a Glycyl lysine isopeptide (Lys-Gly) (interchain with G-Cter in SUMO1); alternate linkage. Residues lysine 248 and lysine 250 each participate in a glycyl lysine isopeptide (Lys-Gly) (interchain with G-Cter in SUMO2); alternate cross-link. N6-acetyllysine; alternate is present on lysine 250. Phosphoserine is present on serine 254. Residue lysine 257 is modified to N6-acetyllysine; alternate. A Glycyl lysine isopeptide (Lys-Gly) (interchain with G-Cter in SUMO1); alternate cross-link involves residue lysine 257. A Glycyl lysine isopeptide (Lys-Gly) (interchain with G-Cter in SUMO2); alternate cross-link involves residue lysine 257. Position 257 is an N6-acetyllysine (lysine 257). Serine 260 bears the Phosphoserine mark. Residues lysine 263, lysine 267, and lysine 273 each participate in a glycyl lysine isopeptide (Lys-Gly) (interchain with G-Cter in SUMO2); alternate cross-link. A Glycyl lysine isopeptide (Lys-Gly) (interchain with G-Cter in SUMO); alternate cross-link involves residue lysine 263. An N6-acetyllysine; alternate mark is found at lysine 267 and lysine 273. Lysine 267 participates in a covalent cross-link: Glycyl lysine isopeptide (Lys-Gly) (interchain with G-Cter in SUMO1); alternate. N6-succinyllysine; alternate is present on lysine 267. A Phosphothreonine modification is found at threonine 279. At lysine 292 the chain carries N6-acetyllysine.

Belongs to the nucleoplasmin family. Decamer formed by two pentameric rings associated in a head-to-head fashion. Disulfide-linked dimers under certain conditions. The SWAP complex consists of NPM1, NCL, PARP1 and SWAP70. Interacts with NSUN2 and SENP3. Interacts with the methylated form of RPS10. Interacts (via N-terminal domain) with APEX1; the interaction is RNA-dependent and decreases in hydrogen peroxide-damaged cells. Interacts with isoform 1 of NEK2. Interacts with ROCK2 and BRCA2. Interacts with RPGR. Interacts with CENPW. Interacts with EIF2AK2/PKR. Interacts with CEBPA (isoform 4). Interacts with DDX31; this interaction prevents interaction between NPM1 and HDM2. Interacts with MYC; competitive with NOP53. Interacts with NOP53; the interaction is direct and competitive with MYC. Interacts with LRRC34. Interacts with RRP1B. Interacts with NPM3. Interacts with ALKBH2. Interacts with TTF1 (via C-terminal region). Interacts with NOP2. Interacts with ARID3C (via REKLES DOMAIN); the interaction mediates ARID3C nuclear shuttling. As to quaternary structure, (Microbial infection) Interacts with hepatitis delta virus S-HDAg. In terms of assembly, (Microbial infection) Interacts with HTLV1 Rex protein (via N-terminal nuclear localization signal). Acetylated at C-terminal lysine residues, thereby increasing affinity to histones. In terms of processing, ADP-ribosylated. Post-translationally, phosphorylated at Ser-4 by PLK1 and PLK2. Phosphorylation at Ser-4 by PLK2 in S phase is required for centriole duplication and is sufficient to trigger centriole replication. Phosphorylation at Ser-4 by PLK1 takes place during mitosis. Phosphorylated by CDK2 at Ser-125 and Thr-199. Phosphorylation at Thr-199 may trigger initiation of centrosome duplication. Phosphorylated by CDK1 at Thr-199, Thr-219, Thr-234 and Thr-237 during cell mitosis. When these four sites are phosphorated, RNA-binding activity seem to be abolished. May be phosphorylated at Ser-70 by NEK2. The Thr-199 phosphorylated form has higher affinity for ROCK2. CDK6 triggers Thr-199 phosphorylation when complexed to Kaposi's sarcoma herpesvirus (KSHV) V-cyclin, leading to viral reactivation by reducing viral LANA levels. Sumoylated by ARF. In terms of processing, ubiquitinated. Ubiquitination leads to proteasomal degradation. Deubiquitinated by USP36.

It is found in the nucleus. The protein resides in the nucleolus. The protein localises to the nucleoplasm. Its subcellular location is the cytoplasm. It localises to the cytoskeleton. It is found in the microtubule organizing center. The protein resides in the centrosome. Involved in diverse cellular processes such as ribosome biogenesis, centrosome duplication, protein chaperoning, histone assembly, cell proliferation, and regulation of tumor suppressors p53/TP53 and ARF. Binds ribosome presumably to drive ribosome nuclear export. Associated with nucleolar ribonucleoprotein structures and bind single-stranded nucleic acids. Acts as a chaperonin for the core histones H3, H2B and H4. Stimulates APEX1 endonuclease activity on apurinic/apyrimidinic (AP) double-stranded DNA but inhibits APEX1 endonuclease activity on AP single-stranded RNA. May exert a control of APEX1 endonuclease activity within nucleoli devoted to repair AP on rDNA and the removal of oxidized rRNA molecules. In concert with BRCA2, regulates centrosome duplication. Regulates centriole duplication: phosphorylation by PLK2 is able to trigger centriole replication. Negatively regulates the activation of EIF2AK2/PKR and suppresses apoptosis through inhibition of EIF2AK2/PKR autophosphorylation. Antagonizes the inhibitory effect of ATF5 on cell proliferation and relieves ATF5-induced G2/M blockade. In complex with MYC enhances the transcription of MYC target genes. May act as chaperonin or cotransporter in the nucleolar localization of transcription termination factor TTF1. This Homo sapiens (Human) protein is Nucleophosmin.